The chain runs to 264 residues: Ribosomal RNA small subunit methyltransferase A (264 aa).

H15, L17, G42, E63, D88, and N109 together coordinate S-adenosyl-L-methionine.

It belongs to the class I-like SAM-binding methyltransferase superfamily. rRNA adenine N(6)-methyltransferase family. RsmA subfamily.

Its subcellular location is the cytoplasm. It carries out the reaction adenosine(1518)/adenosine(1519) in 16S rRNA + 4 S-adenosyl-L-methionine = N(6)-dimethyladenosine(1518)/N(6)-dimethyladenosine(1519) in 16S rRNA + 4 S-adenosyl-L-homocysteine + 4 H(+). Functionally, specifically dimethylates two adjacent adenosines (A1518 and A1519) in the loop of a conserved hairpin near the 3'-end of 16S rRNA in the 30S particle. May play a critical role in biogenesis of 30S subunits. The chain is Ribosomal RNA small subunit methyltransferase A from Nitrosococcus oceani (strain ATCC 19707 / BCRC 17464 / JCM 30415 / NCIMB 11848 / C-107).